The primary structure comprises 308 residues: Mycothiol acetyltransferase (308 aa).

Residues 1–20 are disordered; that stretch reads MTSDDTAQPSGARRIETRPD. N-acetyltransferase domains lie at 15 to 152 and 165 to 308; these read IETR…RSLT and VTVR…RSET. Glu47 contributes to the 1D-myo-inositol 2-(L-cysteinylamino)-2-deoxy-alpha-D-glucopyranoside binding site. Residue 91 to 93 participates in acetyl-CoA binding; it reads LVV. Positions 192, 231, and 240 each coordinate 1D-myo-inositol 2-(L-cysteinylamino)-2-deoxy-alpha-D-glucopyranoside. Acetyl-CoA-binding positions include 244–246 and 251–257; these read VGV and QGGGLGK. Tyr278 lines the 1D-myo-inositol 2-(L-cysteinylamino)-2-deoxy-alpha-D-glucopyranoside pocket.

Belongs to the acetyltransferase family. MshD subfamily. In terms of assembly, monomer.

It catalyses the reaction 1D-myo-inositol 2-(L-cysteinylamino)-2-deoxy-alpha-D-glucopyranoside + acetyl-CoA = mycothiol + CoA + H(+). Catalyzes the transfer of acetyl from acetyl-CoA to desacetylmycothiol (Cys-GlcN-Ins) to form mycothiol. This Streptomyces scabiei (strain 87.22) protein is Mycothiol acetyltransferase.